The chain runs to 423 residues: D-tagatose-1,6-bisphosphate aldolase subunit GatZ (423 aa).

It belongs to the GatZ/KbaZ family. GatZ subfamily. Forms a complex with GatY.

It participates in carbohydrate metabolism; D-tagatose 6-phosphate degradation; D-glyceraldehyde 3-phosphate and glycerone phosphate from D-tagatose 6-phosphate: step 2/2. In terms of biological role, component of the tagatose-1,6-bisphosphate aldolase GatYZ that is required for full activity and stability of the Y subunit. Could have a chaperone-like function for the proper and stable folding of GatY. When expressed alone, GatZ does not show any aldolase activity. Is involved in the catabolism of galactitol. This Salmonella dublin (strain CT_02021853) protein is D-tagatose-1,6-bisphosphate aldolase subunit GatZ.